The chain runs to 331 residues: Tetraacyldisaccharide 4'-kinase (331 aa).

Position 55–62 (55–62) interacts with ATP; that stretch reads TAGGNGKT.

Belongs to the LpxK family.

The catalysed reaction is a lipid A disaccharide + ATP = a lipid IVA + ADP + H(+). Its pathway is glycolipid biosynthesis; lipid IV(A) biosynthesis; lipid IV(A) from (3R)-3-hydroxytetradecanoyl-[acyl-carrier-protein] and UDP-N-acetyl-alpha-D-glucosamine: step 6/6. Its function is as follows. Transfers the gamma-phosphate of ATP to the 4'-position of a tetraacyldisaccharide 1-phosphate intermediate (termed DS-1-P) to form tetraacyldisaccharide 1,4'-bis-phosphate (lipid IVA). In Edwardsiella ictaluri (strain 93-146), this protein is Tetraacyldisaccharide 4'-kinase.